Consider the following 317-residue polypeptide: Aquaporin-2 (317 aa).

At 1–75 the chain is on the cytoplasmic side; that stretch reads MSLRDDLTIN…RSQEFKMQHR (75 aa). Residues 76–96 form a helical membrane-spanning segment; sequence EFLAEFIGTLILVLLTCGFCA. Residues 97 to 108 lie on the Extracellular side of the membrane; it reads EQTLNIEKSKSW. Residues 109-129 form a helical membrane-spanning segment; it reads LTSSLGSGLSVLIGICVAGHV. Over 130-154 the chain is Cytoplasmic; that stretch reads SGGHLNPAITIAFWVFSGFPIRKVP. The NPA 1 signature appears at 135-137; that stretch reads NPA. Residues 155–175 traverse the membrane as a helical segment; it reads MYITAQLLGAFSGAALLYSIV. At 176–208 the chain is on the extracellular side; that stretch reads EPAISQFDHGKRQILGELGTAGIFGTYPPLYVG. The helical transmembrane segment at 209–229 threads the bilayer; it reads TGSAVASEVVGTAMLLLVVMV. Topologically, residues 230–242 are cytoplasmic; the sequence is TGHPNNLPFRTAQ. Residues 243-263 form a helical membrane-spanning segment; the sequence is GAMIALGVTTISLCIGYTSGF. The Extracellular segment spans residues 264 to 295; the sequence is SLNPARDFGPRLFTAVAGWGIDVFTVHHYYAL. Residues 266 to 268 carry the NPA 2 motif; that stretch reads NPA. A helical transmembrane segment spans residues 296–316; that stretch reads VPMFAPILGGLAGGFIYTVFI. Position 317 (aspartate 317) is a topological domain, cytoplasmic.

Belongs to the MIP/aquaporin (TC 1.A.8) family.

The protein localises to the cell membrane. The catalysed reaction is H2O(in) = H2O(out). The enzyme catalyses glycerol(in) = glycerol(out). Water channel required to facilitate the transport of water across membranes. Contributes to water uptake of spores during the early stages of spore germination. Aquaporins AQP1 and AQP2 act as extracellular pH sensors and enable the spores to hydrate under favorable conditions and to commence germination. Wounded vegetables and fruit present acidic pH, so the optimal pH range for germination is adapted to the relevant host pH. The sequence is that of Aquaporin-2 from Rhizopus delemar (strain RA 99-880 / ATCC MYA-4621 / FGSC 9543 / NRRL 43880) (Mucormycosis agent).